The sequence spans 170 residues: NADH-quinone oxidoreductase subunit B (170 aa).

[4Fe-4S] cluster-binding residues include cysteine 37, cysteine 38, cysteine 102, and cysteine 131.

Belongs to the complex I 20 kDa subunit family. As to quaternary structure, NDH-1 is composed of 14 different subunits. Subunits NuoB, C, D, E, F, and G constitute the peripheral sector of the complex. [4Fe-4S] cluster is required as a cofactor.

Its subcellular location is the cell inner membrane. It carries out the reaction a quinone + NADH + 5 H(+)(in) = a quinol + NAD(+) + 4 H(+)(out). Its function is as follows. NDH-1 shuttles electrons from NADH, via FMN and iron-sulfur (Fe-S) centers, to quinones in the respiratory chain. The immediate electron acceptor for the enzyme in this species is believed to be ubiquinone. Couples the redox reaction to proton translocation (for every two electrons transferred, four hydrogen ions are translocated across the cytoplasmic membrane), and thus conserves the redox energy in a proton gradient. This is NADH-quinone oxidoreductase subunit B from Geobacter sulfurreducens (strain ATCC 51573 / DSM 12127 / PCA).